We begin with the raw amino-acid sequence, 120 residues long: Large ribosomal subunit protein bL19 (120 aa).

Belongs to the bacterial ribosomal protein bL19 family.

In terms of biological role, this protein is located at the 30S-50S ribosomal subunit interface and may play a role in the structure and function of the aminoacyl-tRNA binding site. The polypeptide is Large ribosomal subunit protein bL19 (Cyanothece sp. (strain PCC 7425 / ATCC 29141)).